The following is a 201-amino-acid chain: Probable quinol oxidase subunit 3 (201 aa).

5 helical membrane-spanning segments follow: residues 20–40 (LGFWIFITAEFALFGTLFATL), 62–82 (LVLIMTFALLFSSYTCGIAIY), 91–111 (LMMFWMIITLLLGLVFVGFEI), 133–153 (FFILLGTHGCHVSLGIVWAIC), and 172–192 (FIVSLYWHFLDVVWVFIFTAV).

It belongs to the cytochrome c oxidase subunit 3 family.

Its subcellular location is the cell membrane. It carries out the reaction 2 a quinol + O2 = 2 a quinone + 2 H2O. In terms of biological role, catalyzes quinol oxidation with the concomitant reduction of oxygen to water. The sequence is that of Probable quinol oxidase subunit 3 (qoxC) from Staphylococcus aureus (strain MSSA476).